The primary structure comprises 406 residues: B3 domain-containing protein Os11g0197600 (406 aa).

The segment at Met-1–Glu-20 is disordered. A DNA-binding region (TF-B3 1) is located at residues Arg-30–Ser-123. Positions Glu-199–Leu-245 are disordered. Residues Lys-214 to Gly-225 are compositionally biased toward polar residues. The TF-B3 2 DNA-binding region spans Ala-298 to Val-393.

It localises to the nucleus. This chain is B3 domain-containing protein Os11g0197600, found in Oryza sativa subsp. japonica (Rice).